Consider the following 160-residue polypeptide: UPF0178 protein PSPA7_5991 (160 aa).

The protein belongs to the UPF0178 family.

This Pseudomonas paraeruginosa (strain DSM 24068 / PA7) (Pseudomonas aeruginosa (strain PA7)) protein is UPF0178 protein PSPA7_5991.